Here is a 425-residue protein sequence, read N- to C-terminus: Enolase (425 aa).

Glutamine 164 contacts (2R)-2-phosphoglycerate. Catalysis depends on glutamate 208, which acts as the Proton donor. Mg(2+) is bound by residues aspartate 243, glutamate 286, and aspartate 312. Residues lysine 337, arginine 366, serine 367, and lysine 388 each contribute to the (2R)-2-phosphoglycerate site. Catalysis depends on lysine 337, which acts as the Proton acceptor.

Belongs to the enolase family. Requires Mg(2+) as cofactor.

The protein resides in the cytoplasm. The protein localises to the secreted. It localises to the cell surface. It carries out the reaction (2R)-2-phosphoglycerate = phosphoenolpyruvate + H2O. It functions in the pathway carbohydrate degradation; glycolysis; pyruvate from D-glyceraldehyde 3-phosphate: step 4/5. Functionally, catalyzes the reversible conversion of 2-phosphoglycerate (2-PG) into phosphoenolpyruvate (PEP). It is essential for the degradation of carbohydrates via glycolysis. The sequence is that of Enolase from Methanococcus aeolicus (strain ATCC BAA-1280 / DSM 17508 / OCM 812 / Nankai-3).